Consider the following 77-residue polypeptide: MADFEKVKSIIVEQLGVDESEVTPEAHFIDDLGADSLDTVELVMALEEEFGIEISDEDAEKIQTVGDVTKFIDNLKS.

The 76-residue stretch at 1-76 (MADFEKVKSI…DVTKFIDNLK (76 aa)) folds into the Carrier domain. S36 bears the O-(pantetheine 4'-phosphoryl)serine mark.

It belongs to the acyl carrier protein (ACP) family. Post-translationally, 4'-phosphopantetheine is transferred from CoA to a specific serine of apo-ACP by AcpS. This modification is essential for activity because fatty acids are bound in thioester linkage to the sulfhydryl of the prosthetic group.

It localises to the cytoplasm. It functions in the pathway lipid metabolism; fatty acid biosynthesis. Carrier of the growing fatty acid chain in fatty acid biosynthesis. The protein is Acyl carrier protein of Leptospira borgpetersenii serovar Hardjo-bovis (strain JB197).